Here is a 170-residue protein sequence, read N- to C-terminus: Arginine repressor (170 aa).

The protein belongs to the ArgR family.

It is found in the cytoplasm. It functions in the pathway amino-acid biosynthesis; L-arginine biosynthesis [regulation]. Regulates arginine biosynthesis genes. The protein is Arginine repressor of Mycobacterium tuberculosis (strain ATCC 25177 / H37Ra).